The primary structure comprises 393 residues: Chorismate synthase (393 aa).

Positions 39 and 45 each coordinate NADP(+). Residues 133-135, 256-257, Gly-301, 316-320, and Arg-342 contribute to the FMN site; these read RSS, NA, and KPIPT.

Belongs to the chorismate synthase family. Homotetramer. It depends on FMNH2 as a cofactor.

The catalysed reaction is 5-O-(1-carboxyvinyl)-3-phosphoshikimate = chorismate + phosphate. Its pathway is metabolic intermediate biosynthesis; chorismate biosynthesis; chorismate from D-erythrose 4-phosphate and phosphoenolpyruvate: step 7/7. Catalyzes the anti-1,4-elimination of the C-3 phosphate and the C-6 proR hydrogen from 5-enolpyruvylshikimate-3-phosphate (EPSP) to yield chorismate, which is the branch point compound that serves as the starting substrate for the three terminal pathways of aromatic amino acid biosynthesis. This reaction introduces a second double bond into the aromatic ring system. The polypeptide is Chorismate synthase (Lysinibacillus sphaericus (strain C3-41)).